Here is a 391-residue protein sequence, read N- to C-terminus: 3-ketoacyl-CoA thiolase (391 aa).

Catalysis depends on Cys95, which acts as the Acyl-thioester intermediate. Active-site proton acceptor residues include His347 and Cys377.

Belongs to the thiolase-like superfamily. Thiolase family. As to quaternary structure, heterotetramer of two alpha chains (FadB) and two beta chains (FadA).

It localises to the cytoplasm. It catalyses the reaction an acyl-CoA + acetyl-CoA = a 3-oxoacyl-CoA + CoA. The protein operates within lipid metabolism; fatty acid beta-oxidation. In terms of biological role, catalyzes the final step of fatty acid oxidation in which acetyl-CoA is released and the CoA ester of a fatty acid two carbons shorter is formed. The chain is 3-ketoacyl-CoA thiolase from Pseudomonas aeruginosa (strain ATCC 15692 / DSM 22644 / CIP 104116 / JCM 14847 / LMG 12228 / 1C / PRS 101 / PAO1).